The sequence spans 299 residues: Oxygen-dependent coproporphyrinogen-III oxidase (299 aa).

A substrate-binding site is contributed by S92. Residues H96 and H106 each contribute to the a divalent metal cation site. H106 serves as the catalytic Proton donor. Position 108 to 110 (N108 to R110) interacts with substrate. The a divalent metal cation site is built by H145 and H175. Positions Y239–E274 are important for dimerization. Residue G257–R259 coordinates substrate.

This sequence belongs to the aerobic coproporphyrinogen-III oxidase family. Homodimer. The cofactor is a divalent metal cation.

The protein localises to the cytoplasm. It catalyses the reaction coproporphyrinogen III + O2 + 2 H(+) = protoporphyrinogen IX + 2 CO2 + 2 H2O. It participates in porphyrin-containing compound metabolism; protoporphyrin-IX biosynthesis; protoporphyrinogen-IX from coproporphyrinogen-III (O2 route): step 1/1. Functionally, involved in the heme biosynthesis. Catalyzes the aerobic oxidative decarboxylation of propionate groups of rings A and B of coproporphyrinogen-III to yield the vinyl groups in protoporphyrinogen-IX. The chain is Oxygen-dependent coproporphyrinogen-III oxidase from Xanthomonas euvesicatoria pv. vesicatoria (strain 85-10) (Xanthomonas campestris pv. vesicatoria).